Consider the following 389-residue polypeptide: Protein DDI1 homolog 1 (389 aa).

The interval 109–132 (SSSSAQSAQRTRRVEQDDEGEKSM) is disordered. Residue Asp-261 is part of the active site.

This sequence belongs to the DDI1 family. In terms of tissue distribution, expressed in most tissues.

Its subcellular location is the cytoplasm. The protein localises to the nucleus. Its function is as follows. Aspartic protease. Required for the cleavage and activation of transcription factors such as isoform a of the transcription factor skn-1, which in turn regulates the expression of proteasomal subunits such as rpt-3. Plays a key role in the degradation of the potassium channel slo-1, perhaps acting directly, in cleaving slo-1 upstream of the ER-associated degradation pathway (ERAD), and also indirectly, via activation of the transcription factor skn-1, which mediates proteasomal homeostasis. This chain is Protein DDI1 homolog 1, found in Caenorhabditis elegans.